A 300-amino-acid polypeptide reads, in one-letter code: Protein p34 (300 aa).

5 helical membrane passes run Tyr-14–Thr-34, Ile-39–Ala-59, Ser-87–Ile-107, Ile-119–Ile-139, and Leu-170–Phe-190.

Belongs to the cation diffusion facilitator (CDF) transporter (TC 2.A.4) family.

Its subcellular location is the cell membrane. The protein is Protein p34 (p34) of Rickettsia prowazekii (strain Madrid E).